A 38-amino-acid polypeptide reads, in one-letter code: Photosystem II reaction center protein L (38 aa).

The helical transmembrane segment at 17–37 (SLYWGLLLIFVLAVPFSNYFF) threads the bilayer.

It belongs to the PsbL family. As to quaternary structure, PSII is composed of 1 copy each of membrane proteins PsbA, PsbB, PsbC, PsbD, PsbE, PsbF, PsbH, PsbI, PsbJ, PsbK, PsbL, PsbM, PsbT, PsbX, PsbY, PsbZ, Psb30/Ycf12, at least 3 peripheral proteins of the oxygen-evolving complex and a large number of cofactors. It forms dimeric complexes.

The protein localises to the plastid. It is found in the chloroplast thylakoid membrane. Functionally, one of the components of the core complex of photosystem II (PSII). PSII is a light-driven water:plastoquinone oxidoreductase that uses light energy to abstract electrons from H(2)O, generating O(2) and a proton gradient subsequently used for ATP formation. It consists of a core antenna complex that captures photons, and an electron transfer chain that converts photonic excitation into a charge separation. This subunit is found at the monomer-monomer interface and is required for correct PSII assembly and/or dimerization. This chain is Photosystem II reaction center protein L, found in Cedrus deodara (Deodar cedar).